The sequence spans 544 residues: MRLAYWMYEGTAHHGVGRIANSMRNVHAVFHAPQGDDYVNAIFAMLERSPNFPAMTTSVVSGTDLARGTIRLPDTLKQVEERVHPDLIIVVASCSTILLQENLEIAAQHAGLQCEVMVYDANPYRMQEIVAAESLFTDLVKRFAKPQPRTERPTVNILGPASLGFHARHDLISLRRMLKTLGVEINVVAPWGASIADLRRLPAAWLTIAPYRELGLRAATYLEEQFGVPALLDAPIGVQPTLRWIERLRELLAQAGADIPMPPLTAFSLDGLSAPSAVPWLARTADMDSFSGKPAFVFGDATHVVGVTRFLHDELGMPIAGAGTYVKHQADWVREQLAGYVDEVLVTDEFQTVAARIAALRPELVCGTQMERHTSRRYDLNCMVISPPTHIENHLLAYRPFLGFDGADVIADEVYTTCTLGMEKHLIDLFGDAGLELPEKAKNGSAQAVEPAPAAVTVESPKPEQEPAVATVAVSGPTPAVAAPPAPAAPVDPVWAADAEAMLKKVPFFVRGRVRGNVERYARQHGHAVITAQVLLAAKEELGA.

Asp36 lines the [4Fe-4S] cluster pocket. Asp286 acts as the Proton donor in catalysis. 421–422 contacts substrate; sequence GM.

It belongs to the ChlB/BchB/BchZ family. As to quaternary structure, protochlorophyllide reductase is composed of three subunits; BchL, BchN and BchB. Forms a heterotetramer of two BchB and two BchN subunits. The cofactor is [4Fe-4S] cluster.

It carries out the reaction chlorophyllide a + oxidized 2[4Fe-4S]-[ferredoxin] + 2 ADP + 2 phosphate = protochlorophyllide a + reduced 2[4Fe-4S]-[ferredoxin] + 2 ATP + 2 H2O. Its pathway is porphyrin-containing compound metabolism; bacteriochlorophyll biosynthesis (light-independent). Component of the dark-operative protochlorophyllide reductase (DPOR) that uses Mg-ATP and reduced ferredoxin to reduce ring D of protochlorophyllide (Pchlide) to form chlorophyllide a (Chlide). This reaction is light-independent. The NB-protein (BchN-BchB) is the catalytic component of the complex. The chain is Light-independent protochlorophyllide reductase subunit B from Chloroflexus aggregans (strain MD-66 / DSM 9485).